We begin with the raw amino-acid sequence, 438 residues long: Shikimate transporter (438 aa).

The next 12 membrane-spanning stretches (helical) occupy residues 28–48, 64–84, 109–129, 133–153, 168–188, 193–213, 255–275, 287–307, 318–337, 341–363, 387–407, and 411–431; these read FAGA…AALV, LAAF…GVIF, ALIG…ILLV, AIQG…SVES, VGYG…SMMT, FLSW…LGAL, IIAL…FALN, LFLN…PCFA, VYIT…FMAL, SIFW…VVCV, VASV…ITYF, and WHSV…TALL.

Belongs to the major facilitator superfamily. Metabolite:H+ Symporter (MHS) family (TC 2.A.1.6) family.

It localises to the cell inner membrane. The catalysed reaction is shikimate(in) + H(+)(in) = shikimate(out) + H(+)(out). Involved in the uptake of shikimate, an intermediate in the aromatic amino acid biosynthetic pathway. The sequence is that of Shikimate transporter from Escherichia coli (strain K12).